The primary structure comprises 239 residues: Transcription factor MYB10 (239 aa).

HTH myb-type domains follow at residues 11 to 63 (KSQV…INYL) and 64 to 118 (RPGL…KKRL). 2 consecutive DNA-binding regions (H-T-H motif) follow at residues 39 to 63 (WRSLPKLAGLMRCGKSCRLRWINYL) and 91 to 114 (WSKIASNFPGRTDNEIKNVWNTHL).

As to expression, expressed in cauline leaves and siliques.

The protein resides in the nucleus. In terms of biological role, involved in metal ions homeostasis, including iron ions (Fe) acquisition, via the regulation of NAS4 and NAS2 genes expression. Necessary for plant survival in alkaline soil where iron availability is greatly restricted. Triggers tolerance to nickel (Ni) and zinc (Zn) ions. The sequence is that of Transcription factor MYB10 from Arabidopsis thaliana (Mouse-ear cress).